The sequence spans 161 residues: Peroxynitrite isomerase 1 (161 aa).

The GXWXGXG signature appears at 17–23 (GTWTGRG). Position 152 (histidine 152) interacts with heme b.

The protein belongs to the nitrobindin family. As to quaternary structure, homodimer. Requires heme b as cofactor.

It carries out the reaction peroxynitrite = nitrate. Its pathway is nitrogen metabolism. Functionally, heme-binding protein able to scavenge peroxynitrite and to protect free L-tyrosine against peroxynitrite-mediated nitration, by acting as a peroxynitrite isomerase that converts peroxynitrite to nitrate. Therefore, this protein likely plays a role in peroxynitrite sensing and in the detoxification of reactive nitrogen and oxygen species (RNS and ROS, respectively). Is able to bind nitric oxide (NO) in vitro, but may act as a sensor of peroxynitrite levels in vivo. This is Peroxynitrite isomerase 1 from Mycolicibacterium paratuberculosis (strain ATCC BAA-968 / K-10) (Mycobacterium paratuberculosis).